The chain runs to 170 residues: Lipoprotein signal peptidase (170 aa).

5 helical membrane passes run isoleucine 13–valine 33, leucine 72–glutamate 92, valine 96–isoleucine 113, leucine 116–leucine 136, and phenylalanine 142–phenylalanine 162. Catalysis depends on residues aspartate 124 and aspartate 146.

This sequence belongs to the peptidase A8 family.

Its subcellular location is the cell inner membrane. The catalysed reaction is Release of signal peptides from bacterial membrane prolipoproteins. Hydrolyzes -Xaa-Yaa-Zaa-|-(S,diacylglyceryl)Cys-, in which Xaa is hydrophobic (preferably Leu), and Yaa (Ala or Ser) and Zaa (Gly or Ala) have small, neutral side chains.. Its pathway is protein modification; lipoprotein biosynthesis (signal peptide cleavage). In terms of biological role, this protein specifically catalyzes the removal of signal peptides from prolipoproteins. The protein is Lipoprotein signal peptidase of Borrelia duttonii (strain Ly).